Here is a 103-residue protein sequence, read N- to C-terminus: Large ribosomal subunit protein bL21 (103 aa).

Belongs to the bacterial ribosomal protein bL21 family. In terms of assembly, part of the 50S ribosomal subunit. Contacts protein L20.

This protein binds to 23S rRNA in the presence of protein L20. This is Large ribosomal subunit protein bL21 from Pseudoalteromonas atlantica (strain T6c / ATCC BAA-1087).